The sequence spans 815 residues: cGMP-specific 3',5'-cyclic phosphodiesterase delta (815 aa).

The Cytoplasmic segment spans residues 1-56 (MNEYNNDNMEQEKEKKKEEQKYKNIIKKEYFIFPRLYDKNKEIEYNKLRIHNIKEY). Residues 57–77 (ICIHLTISLFIILIECFVFSF) form a helical membrane-spanning segment. Topologically, residues 78-86 (NLNIKDTTY) are extracellular. The helical transmembrane segment at 87 to 107 (VEICVVIFSILNCLMHIVVLI) threads the bilayer. Residues 108–120 (KMYFFTSESVYTK) lie on the Cytoplasmic side of the membrane. Residues 121 to 141 (GVFIGYIVLNQVFQFLSLYFF) traverse the membrane as a helical segment. Topologically, residues 142–160 (TKRNEQSKNDIAHLKYYDN) are extracellular. Residues 161-181 (SFNLYVHFFVDSVFILCLPAL) traverse the membrane as a helical segment. The Cytoplasmic portion of the chain corresponds to 182 to 183 (SF). Residues 184-204 (FLSVLFMMMFLCLNILLINMI) form a helical membrane-spanning segment. Residues 205-210 (KFNKTN) lie on the Extracellular side of the membrane. The N-linked (GlcNAc...) asparagine glycan is linked to asparagine 207. The chain crosses the membrane as a helical span at residues 211-231 (YGSDIYHICLLSVVLLMFLIL). At 232-815 (RYMMEERNRL…FKEEIKHGKL (584 aa)) the chain is on the cytoplasmic side. Residues 384 to 762 (YEVEVLKNIK…QTWRLIEKNI (379 aa)) enclose the PDEase domain. Residue histidine 459 is the Proton donor of the active site. 459–463 (HNANH) provides a ligand contact to 3',5'-cyclic GMP. A divalent metal cation contacts are provided by histidine 463, histidine 499, aspartate 500, and aspartate 616. Residues aspartate 500, aspartate 616, and glutamine 715 each coordinate 3',5'-cyclic GMP.

This sequence belongs to the cyclic nucleotide phosphodiesterase family. A divalent metal cation is required as a cofactor.

It localises to the membrane. It catalyses the reaction 3',5'-cyclic GMP + H2O = GMP + H(+). It functions in the pathway purine metabolism; 3',5'-cyclic GMP degradation; GMP from 3',5'-cyclic GMP: step 1/1. In terms of biological role, specifically hydrolyzes the second messenger cGMP, which is a key regulator of many important physiological processes. Probably by regulating cGMP levels, required for activation of gametogenesis. The chain is cGMP-specific 3',5'-cyclic phosphodiesterase delta from Plasmodium falciparum (isolate 3D7).